Consider the following 722-residue polypeptide: ORC ubiquitin ligase 1 (722 aa).

An RING-type; degenerate zinc finger spans residues 18 to 56 (CHICLGKVRQPVVCTNNHVFCSICIDLWLKNNSQCPACR). 2 coiled-coil regions span residues 87–129 (LRKT…TILD) and 157–267 (VVEW…KEDV). Position 210 is a phosphoserine (S210). A disordered region spans residues 273–359 (RAPSADSKGP…RLGARETPMD (87 aa)). The span at 302-319 (AGSASASHLASPSSSRLA) shows a compositional bias: low complexity. Polar residues predominate over residues 323–338 (SVRQESTSRTEPNCPQ). The segment covering 339–359 (NKDRYPKPTEPRLGARETPMD) has biased composition (basic and acidic residues). A phosphoserine mark is found at S522, S549, S557, S564, and S566. Residues 541-555 (MSESDNSKSPCNNGF) are compositionally biased toward polar residues. 2 disordered regions span residues 541–585 (MSES…GSKL) and 691–722 (VPEKRSKNGNQSTKRKIQSSLANASPSKATKS). Residues 571–581 (EFLEEPDKLQE) are compositionally biased toward basic and acidic residues. Residues 698–722 (NGNQSTKRKIQSSLANASPSKATKS) show a composition bias toward polar residues. A phosphoserine mark is found at S715 and S717.

Associates with ORC complex. Binds to chromatin; association is cell cycle-regulated, absent from mitotic chromosomes, is associated with chromatin from G1 and partially released from chromatin from mid S-phase. Auto-ubiquitinated.

The protein localises to the chromosome. It carries out the reaction S-ubiquitinyl-[E2 ubiquitin-conjugating enzyme]-L-cysteine + [acceptor protein]-L-lysine = [E2 ubiquitin-conjugating enzyme]-L-cysteine + N(6)-ubiquitinyl-[acceptor protein]-L-lysine.. In terms of biological role, E3 ubiquitin ligase essential for DNA replication origin activation during S phase. Acts as a replication origin selector which selects the origins to be fired and catalyzes the multi-mono-ubiquitination of a subset of chromatin-bound ORC3 and ORC5 during S-phase. The chain is ORC ubiquitin ligase 1 from Mus musculus (Mouse).